Reading from the N-terminus, the 333-residue chain is DNA-directed RNA polymerase subunit alpha (333 aa).

Residues Met-1–Thr-251 are alpha N-terminal domain (alpha-NTD). The interval Asp-272–Asn-333 is alpha C-terminal domain (alpha-CTD).

It belongs to the RNA polymerase alpha chain family. In terms of assembly, homodimer. The RNAP catalytic core consists of 2 alpha, 1 beta, 1 beta' and 1 omega subunit. When a sigma factor is associated with the core the holoenzyme is formed, which can initiate transcription.

The catalysed reaction is RNA(n) + a ribonucleoside 5'-triphosphate = RNA(n+1) + diphosphate. DNA-dependent RNA polymerase catalyzes the transcription of DNA into RNA using the four ribonucleoside triphosphates as substrates. In Mycoplasmopsis synoviae (strain 53) (Mycoplasma synoviae), this protein is DNA-directed RNA polymerase subunit alpha.